A 293-amino-acid chain; its full sequence is Kynurenine formamidase (293 aa).

An HGGXW motif is present at residues 84–88 (HGGYW). Ser153 acts as the Nucleophile in catalysis. Residues Asp236 and His268 contribute to the active site.

This sequence belongs to the kynurenine formamidase family. Homodimer.

The protein localises to the cytoplasm. It is found in the cytosol. Its subcellular location is the nucleus. The enzyme catalyses N-formyl-L-kynurenine + H2O = L-kynurenine + formate + H(+). It functions in the pathway amino-acid degradation; L-tryptophan degradation via kynurenine pathway; L-kynurenine from L-tryptophan: step 2/2. Functionally, catalyzes the hydrolysis of N-formyl-L-kynurenine to L-kynurenine, the second step in the kynurenine pathway of tryptophan degradation. Kynurenine may be further oxidized to nicotinic acid, NAD(H) and NADP(H). Required for elimination of toxic metabolites. The polypeptide is Kynurenine formamidase (afmid) (Danio rerio (Zebrafish)).